We begin with the raw amino-acid sequence, 118 residues long: MARVAGVNIPDNKHTVIALTAIYGIGRTRAQKICEATGVKPDMKIRDLTEEEVEKLRAAVGQFPVEGDLRREVSMNIKRLMDLGCYRGLRHRRGLPLRGQRTRTNARTRKGPRRPIRK.

Positions Gly-94–Lys-118 are disordered.

This sequence belongs to the universal ribosomal protein uS13 family. As to quaternary structure, part of the 30S ribosomal subunit. Forms a loose heterodimer with protein S19. Forms two bridges to the 50S subunit in the 70S ribosome.

In terms of biological role, located at the top of the head of the 30S subunit, it contacts several helices of the 16S rRNA. In the 70S ribosome it contacts the 23S rRNA (bridge B1a) and protein L5 of the 50S subunit (bridge B1b), connecting the 2 subunits; these bridges are implicated in subunit movement. Contacts the tRNAs in the A and P-sites. The protein is Small ribosomal subunit protein uS13 of Thioalkalivibrio sulfidiphilus (strain HL-EbGR7).